Consider the following 196-residue polypeptide: Adenylyl-sulfate kinase (196 aa).

Residue 31–38 (GLSGAGKS) participates in ATP binding. Ser-105 acts as the Phosphoserine intermediate in catalysis.

This sequence belongs to the APS kinase family.

It carries out the reaction adenosine 5'-phosphosulfate + ATP = 3'-phosphoadenylyl sulfate + ADP + H(+). The protein operates within sulfur metabolism; hydrogen sulfide biosynthesis; sulfite from sulfate: step 2/3. Catalyzes the synthesis of activated sulfate. This Pseudomonas aeruginosa (strain ATCC 15692 / DSM 22644 / CIP 104116 / JCM 14847 / LMG 12228 / 1C / PRS 101 / PAO1) protein is Adenylyl-sulfate kinase (cysC).